A 307-amino-acid polypeptide reads, in one-letter code: Probable 2-methylisocitrate lyase 2 (307 aa).

53-55 (SGA) is a binding site for substrate. Positions 92 and 94 each coordinate Mg(2+). Substrate contacts are provided by residues 129-130 (CG), arginine 164, glutamate 194, 216-218 (NMT), arginine 247, and arginine 276.

This sequence belongs to the isocitrate lyase/PEP mutase superfamily. Methylisocitrate lyase family. Homotetramer; dimer of dimers. It depends on Mg(2+) as a cofactor.

It carries out the reaction (2S,3R)-3-hydroxybutane-1,2,3-tricarboxylate = pyruvate + succinate. Its pathway is organic acid metabolism; propanoate degradation. In terms of biological role, involved in the catabolism of short chain fatty acids (SCFA) via the 2-methylcitrate cycle I (propionate degradation route). Catalyzes the thermodynamically favored C-C bond cleavage of (2R,3S)-2-methylisocitrate to yield pyruvate and succinate via an alpha-carboxy-carbanion intermediate. This chain is Probable 2-methylisocitrate lyase 2, found in Corynebacterium glutamicum (strain ATCC 13032 / DSM 20300 / JCM 1318 / BCRC 11384 / CCUG 27702 / LMG 3730 / NBRC 12168 / NCIMB 10025 / NRRL B-2784 / 534).